A 37-amino-acid chain; its full sequence is Potassium channel toxin alpha-KTx 1.13 (37 aa).

A Pyrrolidone carboxylic acid modification is found at Q1. 3 disulfides stabilise this stretch: C7/C28, C13/C33, and C17/C35. An interaction with Ca(2+)-activated K(+) channels region spans residues 26–33; sequence GKCMNKKC.

Belongs to the short scorpion toxin superfamily. Potassium channel inhibitor family. Alpha-KTx 01 subfamily. Expressed by the venom gland.

It is found in the secreted. Functionally, potent selective inhibitor of high conductance (maxi-K), different medium and small conductance calcium-activated potassium channels (KCa1.1/KCNMA1 and others), as well as a voltage-dependent potassium channel (Kv1.3/KCNA3&gt;Kv1.2/KCNA2&gt;Kv1.6/KCNA3&gt;&gt;Shaker/Sh). It blocks channel activity by a simple bimolecular inhibition process. In terms of biological role, has a pH-specific antimicrobial activity against bacteria (B.subtilis, E.coli and S.aureus) and the fungus C.albicans. In Leiurus hebraeus (Hebrew deathstalker scorpion), this protein is Potassium channel toxin alpha-KTx 1.13.